Here is a 167-residue protein sequence, read N- to C-terminus: Phosphopantetheine adenylyltransferase (167 aa).

Ser11 is a binding site for substrate. ATP is bound by residues 11–12 (SF) and His19. The substrate site is built by Lys43, Thr76, and Arg90. Residues 91–93 (GIR), Glu101, and 126–132 (YDALSST) contribute to the ATP site.

The protein belongs to the bacterial CoaD family. As to quaternary structure, homohexamer. The cofactor is Mg(2+).

Its subcellular location is the cytoplasm. It carries out the reaction (R)-4'-phosphopantetheine + ATP + H(+) = 3'-dephospho-CoA + diphosphate. Its pathway is cofactor biosynthesis; coenzyme A biosynthesis; CoA from (R)-pantothenate: step 4/5. Its function is as follows. Reversibly transfers an adenylyl group from ATP to 4'-phosphopantetheine, yielding dephospho-CoA (dPCoA) and pyrophosphate. The protein is Phosphopantetheine adenylyltransferase of Lacticaseibacillus paracasei (strain ATCC 334 / BCRC 17002 / CCUG 31169 / CIP 107868 / KCTC 3260 / NRRL B-441) (Lactobacillus paracasei).